A 78-amino-acid polypeptide reads, in one-letter code: Small ribosomal subunit protein bS18 (78 aa).

Belongs to the bacterial ribosomal protein bS18 family. In terms of assembly, part of the 30S ribosomal subunit. Forms a tight heterodimer with protein bS6.

In terms of biological role, binds as a heterodimer with protein bS6 to the central domain of the 16S rRNA, where it helps stabilize the platform of the 30S subunit. This chain is Small ribosomal subunit protein bS18, found in Beutenbergia cavernae (strain ATCC BAA-8 / DSM 12333 / CCUG 43141 / JCM 11478 / NBRC 16432 / NCIMB 13614 / HKI 0122).